A 529-amino-acid polypeptide reads, in one-letter code: Peptide chain release factor 3 (529 aa).

The tr-type G domain occupies 11 to 280 (AKRRTFAIIS…GLVEWAPAPM (270 aa)). GTP contacts are provided by residues 20–27 (SHPDAGKT), 88–92 (DTPGH), and 142–145 (NKLD).

It belongs to the TRAFAC class translation factor GTPase superfamily. Classic translation factor GTPase family. PrfC subfamily.

It is found in the cytoplasm. In terms of biological role, increases the formation of ribosomal termination complexes and stimulates activities of RF-1 and RF-2. It binds guanine nucleotides and has strong preference for UGA stop codons. It may interact directly with the ribosome. The stimulation of RF-1 and RF-2 is significantly reduced by GTP and GDP, but not by GMP. The chain is Peptide chain release factor 3 from Yersinia pestis bv. Antiqua (strain Antiqua).